Reading from the N-terminus, the 595-residue chain is 3-hydroxy-3-methylglutaryl-coenzyme A reductase 2 (595 aa).

Asn-35 is a glycosylation site (N-linked (GlcNAc...) asparagine). 2 helical membrane passes run Leu-48–Leu-68 and Ala-92–Val-112. The segment at Gln-113–Glu-183 is linker. Asn-121 carries N-linked (GlcNAc...) asparagine glycosylation. The tract at residues Glu-184 to Ser-595 is catalytic. The active-site Charge relay system is the Glu-278. Asn-342 carries N-linked (GlcNAc...) asparagine glycosylation. Residue Lys-410 is the Charge relay system of the active site. The N-linked (GlcNAc...) asparagine glycan is linked to Asn-455. The active-site Charge relay system is Asp-486. Catalysis depends on His-584, which acts as the Proton donor. N-linked (GlcNAc...) asparagine glycosylation occurs at Asn-588.

This sequence belongs to the HMG-CoA reductase family. In terms of tissue distribution, expressed in young flowers and in mature sepals and ovaries.

Its subcellular location is the endoplasmic reticulum membrane. It catalyses the reaction (R)-mevalonate + 2 NADP(+) + CoA = (3S)-3-hydroxy-3-methylglutaryl-CoA + 2 NADPH + 2 H(+). The protein operates within metabolic intermediate biosynthesis; (R)-mevalonate biosynthesis; (R)-mevalonate from acetyl-CoA: step 3/3. Functionally, catalyzes the synthesis of mevalonate. The specific precursor of all isoprenoid compounds present in plants. The chain is 3-hydroxy-3-methylglutaryl-coenzyme A reductase 2 (HMG2) from Solanum tuberosum (Potato).